The primary structure comprises 755 residues: Anaphase-promoting complex subunit 5 (755 aa).

Serine 195 carries the post-translational modification Phosphoserine. TPR repeat units follow at residues 209–249 (QKQA…FNPD), 250–300 (FAEA…GRSL), 301–337 (RYAA…SNDH), 338–378 (VCLQ…YLAS), 379–418 (LGIQ…SELI), 419–466 (DISI…TESF), 467–500 (AVAL…FPPN), 501–540 (SQHA…ALNS), 541–580 (IEGV…TEMV), 581–620 (ISVL…QYLA), 621–660 (SETV…ILDK), 661–696 (GRAM…NLNE), and 697–736 (AKNY…CAML). Threonine 232 carries the post-translational modification Phosphothreonine.

It belongs to the APC5 family. The mammalian APC/C is composed at least of 14 distinct subunits ANAPC1, ANAPC2, CDC27/APC3, ANAPC4, ANAPC5, CDC16/APC6, ANAPC7, CDC23/APC8, ANAPC10, ANAPC11, CDC26/APC12, ANAPC13, ANAPC15 and ANAPC16 that assemble into a complex of at least 19 chains with a combined molecular mass of around 1.2 MDa; APC/C interacts with FZR1 and FBXO5.

It localises to the nucleus. The protein localises to the cytoplasm. It is found in the cytoskeleton. Its subcellular location is the spindle. The protein operates within protein modification; protein ubiquitination. Its function is as follows. Component of the anaphase promoting complex/cyclosome (APC/C), a cell cycle-regulated E3 ubiquitin ligase that controls progression through mitosis and the G1 phase of the cell cycle. The APC/C complex acts by mediating ubiquitination and subsequent degradation of target proteins: it mainly mediates the formation of 'Lys-11'-linked polyubiquitin chains and, to a lower extent, the formation of 'Lys-48'- and 'Lys-63'-linked polyubiquitin chains. The APC/C complex catalyzes assembly of branched 'Lys-11'-/'Lys-48'-linked branched ubiquitin chains on target proteins. In Homo sapiens (Human), this protein is Anaphase-promoting complex subunit 5 (ANAPC5).